The following is a 259-amino-acid chain: 1,2-dihydroxy-1,2-dihydronaphthalene dehydrogenase (259 aa).

NAD(+) contacts are provided by residues 8–35 and aspartate 58; that span reads AITG…SALV. Serine 140 contacts substrate. Residue tyrosine 153 is the Proton acceptor of the active site. Lysine 157 contributes to the NAD(+) binding site.

The protein belongs to the short-chain dehydrogenases/reductases (SDR) family.

It catalyses the reaction (1R,2S)-1,2-dihydronaphthalene-1,2-diol + NAD(+) = naphthalene-1,2-diol + NADH + H(+). It functions in the pathway aromatic compound metabolism; naphthalene degradation. Functionally, catalyzes the oxidation of naphthalene dihydrodiol into 1,2-dihydroxynaphthalene. The polypeptide is 1,2-dihydroxy-1,2-dihydronaphthalene dehydrogenase (Ralstonia sp).